The sequence spans 343 residues: S-adenosylmethionine:tRNA ribosyltransferase-isomerase (343 aa).

Belongs to the QueA family. In terms of assembly, monomer.

The protein resides in the cytoplasm. It catalyses the reaction 7-aminomethyl-7-carbaguanosine(34) in tRNA + S-adenosyl-L-methionine = epoxyqueuosine(34) in tRNA + adenine + L-methionine + 2 H(+). It functions in the pathway tRNA modification; tRNA-queuosine biosynthesis. Transfers and isomerizes the ribose moiety from AdoMet to the 7-aminomethyl group of 7-deazaguanine (preQ1-tRNA) to give epoxyqueuosine (oQ-tRNA). The protein is S-adenosylmethionine:tRNA ribosyltransferase-isomerase of Geobacter metallireducens (strain ATCC 53774 / DSM 7210 / GS-15).